The primary structure comprises 439 residues: Elongation factor Tu, mitochondrial (439 aa).

Positions 51–246 (KPHVNIGTIG…AVDSYITLPE (196 aa)) constitute a tr-type G domain. The interval 60-67 (GHVDHGKT) is G1. 60–67 (GHVDHGKT) contacts GTP. The segment at 101–105 (GITIS) is G2. The interval 122–125 (DCPG) is G3. GTP contacts are provided by residues 122-126 (DCPGH) and 177-180 (NKVD). The segment at 177–180 (NKVD) is G4. The G5 stretch occupies residues 214 to 216 (SAL).

It belongs to the TRAFAC class translation factor GTPase superfamily. Classic translation factor GTPase family. EF-Tu/EF-1A subfamily.

The protein resides in the mitochondrion. Its function is as follows. This protein promotes the GTP-dependent binding of aminoacyl-tRNA to the A-site of ribosomes during protein biosynthesis. In Schizosaccharomyces pombe (strain 972 / ATCC 24843) (Fission yeast), this protein is Elongation factor Tu, mitochondrial (tuf1).